A 292-amino-acid chain; its full sequence is Small ribosomal subunit biogenesis GTPase RsgA (292 aa).

A CP-type G domain is found at 64–221 (RSELFRPAVA…LVDTPGFSSL (158 aa)). Residues 113-116 (NKMD) and 164-172 (GPSGVGKST) each bind GTP. Zn(2+) contacts are provided by Cys245, Cys250, His252, and Cys258.

It belongs to the TRAFAC class YlqF/YawG GTPase family. RsgA subfamily. As to quaternary structure, monomer. Associates with 30S ribosomal subunit, binds 16S rRNA. The cofactor is Zn(2+).

It localises to the cytoplasm. Functionally, one of several proteins that assist in the late maturation steps of the functional core of the 30S ribosomal subunit. Helps release RbfA from mature subunits. May play a role in the assembly of ribosomal proteins into the subunit. Circularly permuted GTPase that catalyzes slow GTP hydrolysis, GTPase activity is stimulated by the 30S ribosomal subunit. This chain is Small ribosomal subunit biogenesis GTPase RsgA, found in Clostridium botulinum (strain ATCC 19397 / Type A).